A 455-amino-acid polypeptide reads, in one-letter code: P2X purinoceptor 5 (455 aa).

Topologically, residues 1–34 are cytoplasmic; that stretch reads MGQAAWKGFVLSLFDYKTAKFVVAKSKKVGLLYR. A helical membrane pass occupies residues 35–55; sequence VLQLIILLYLLIWVFLIKKSY. The Extracellular segment spans residues 56 to 341; that stretch reads QDIDTSLQSA…SIIPTVINIG (286 aa). K69 and K71 together coordinate ATP. N77 carries an N-linked (GlcNAc...) asparagine glycan. Disulfide bonds link C118/C169, C129/C152, and C135/C163. N157 carries N-linked (GlcNAc...) asparagine glycosylation. Residue T189 coordinates ATP. N-linked (GlcNAc...) asparagine glycosylation occurs at N202. Intrachain disulfides connect C220–C229 and C263–C272. ATP is bound by residues N294, R296, and K314. The helical transmembrane segment at 342–362 threads the bilayer; sequence SGLALMGAGAFFCDLVLIYLI. At 363–455 the chain is on the cytoplasmic side; sequence RKSEFYRDKK…QSQILHPVKT (93 aa). The segment covering 384–401 has biased composition (acidic residues); the sequence is NVEVEANEMEQERPEDEP. Residues 384 to 422 form a disordered region; the sequence is NVEVEANEMEQERPEDEPLERVRQDEQSQELAQSGRKQN. Residues 412–422 show a composition bias toward polar residues; it reads QELAQSGRKQN.

The protein belongs to the P2X receptor family. In terms of assembly, functional P2XRs are organized as homomeric and heteromeric trimers. Homotrimer. Forms heterotrimer with P2RX1. Predominantly expressed in heart but are also present in brain, spinal cord and adrenal gland.

The protein localises to the cell membrane. It carries out the reaction Na(+)(in) = Na(+)(out). It catalyses the reaction Ca(2+)(in) = Ca(2+)(out). The enzyme catalyses chloride(in) = chloride(out). With respect to regulation, activated by ATP. Slowly desensitizing. Not activated by ATP agonist alpha/beta-methylene-ATP. Highly sensitive to the antagonists suramin and PPADS. Its function is as follows. ATP-gated nonselective transmembrane cation channel. Permeable to potassium, sodium and calcium. Unlike other P2RX receptors, the P2X5 receptor is also permeable to chloride. Acts as an important regulator of inflammatory-related bone loss and osteoclast multinucleation. The chain is P2X purinoceptor 5 (P2rx5) from Rattus norvegicus (Rat).